A 275-amino-acid polypeptide reads, in one-letter code: 3-methyl-2-oxobutanoate hydroxymethyltransferase (275 aa).

Positions 44 and 83 each coordinate Mg(2+). 3-methyl-2-oxobutanoate is bound by residues 44–45 (DS), D83, and K113. E115 provides a ligand contact to Mg(2+). E182 serves as the catalytic Proton acceptor.

Belongs to the PanB family. As to quaternary structure, homodecamer; pentamer of dimers. It depends on Mg(2+) as a cofactor.

It localises to the cytoplasm. The enzyme catalyses 3-methyl-2-oxobutanoate + (6R)-5,10-methylene-5,6,7,8-tetrahydrofolate + H2O = 2-dehydropantoate + (6S)-5,6,7,8-tetrahydrofolate. It functions in the pathway cofactor biosynthesis; (R)-pantothenate biosynthesis; (R)-pantoate from 3-methyl-2-oxobutanoate: step 1/2. Catalyzes the reversible reaction in which hydroxymethyl group from 5,10-methylenetetrahydrofolate is transferred onto alpha-ketoisovalerate to form ketopantoate. This chain is 3-methyl-2-oxobutanoate hydroxymethyltransferase, found in Clostridium beijerinckii (strain ATCC 51743 / NCIMB 8052) (Clostridium acetobutylicum).